A 235-amino-acid chain; its full sequence is Aspartate/glutamate leucyltransferase (235 aa).

Belongs to the R-transferase family. Bpt subfamily.

The protein localises to the cytoplasm. It carries out the reaction N-terminal L-glutamyl-[protein] + L-leucyl-tRNA(Leu) = N-terminal L-leucyl-L-glutamyl-[protein] + tRNA(Leu) + H(+). It catalyses the reaction N-terminal L-aspartyl-[protein] + L-leucyl-tRNA(Leu) = N-terminal L-leucyl-L-aspartyl-[protein] + tRNA(Leu) + H(+). Functionally, functions in the N-end rule pathway of protein degradation where it conjugates Leu from its aminoacyl-tRNA to the N-termini of proteins containing an N-terminal aspartate or glutamate. This chain is Aspartate/glutamate leucyltransferase, found in Pseudomonas fluorescens (strain SBW25).